The primary structure comprises 1368 residues: DNA-directed RNA polymerase subunit beta (1368 aa).

Belongs to the RNA polymerase beta chain family. In terms of assembly, the RNAP catalytic core consists of 2 alpha, 1 beta, 1 beta' and 1 omega subunit. When a sigma factor is associated with the core the holoenzyme is formed, which can initiate transcription.

The enzyme catalyses RNA(n) + a ribonucleoside 5'-triphosphate = RNA(n+1) + diphosphate. DNA-dependent RNA polymerase catalyzes the transcription of DNA into RNA using the four ribonucleoside triphosphates as substrates. The polypeptide is DNA-directed RNA polymerase subunit beta (Ralstonia pickettii (strain 12J)).